A 347-amino-acid chain; its full sequence is Protein pelota homolog (347 aa).

This sequence belongs to the eukaryotic release factor 1 family. Pelota subfamily. Monomer. The cofactor is a divalent metal cation.

It is found in the cytoplasm. Its function is as follows. May function in recognizing stalled ribosomes, interact with stem-loop structures in stalled mRNA molecules, and effect endonucleolytic cleavage of the mRNA. May play a role in the release non-functional ribosomes and degradation of damaged mRNAs. Has endoribonuclease activity. The chain is Protein pelota homolog from Methanococcoides burtonii (strain DSM 6242 / NBRC 107633 / OCM 468 / ACE-M).